We begin with the raw amino-acid sequence, 265 residues long: Very long chain fatty acid elongase 6 (265 aa).

A glycan (N-linked (GlcNAc...) asparagine) is linked at Asn-2. A run of 7 helical transmembrane segments spans residues 34–51 (FLFS…RHLM), 70–90 (LAVF…YILM), 111–131 (FWAY…IFII), 137–156 (LIFL…WYSY), 159–179 (MVAG…VMYS), 197–217 (FITL…YLVF), and 232–252 (IIWS…FFFE).

It belongs to the ELO family. ELOVL6 subfamily. N-Glycosylated.

It is found in the endoplasmic reticulum membrane. It catalyses the reaction a very-long-chain acyl-CoA + malonyl-CoA + H(+) = a very-long-chain 3-oxoacyl-CoA + CO2 + CoA. The catalysed reaction is hexadecanoyl-CoA + malonyl-CoA + H(+) = 3-oxooctadecanoyl-CoA + CO2 + CoA. It carries out the reaction (9Z)-hexadecenoyl-CoA + malonyl-CoA + H(+) = 3-oxo-(11Z)-octadecenoyl-CoA + CO2 + CoA. The enzyme catalyses dodecanoyl-CoA + malonyl-CoA + H(+) = 3-oxotetradecanoyl-CoA + CO2 + CoA. It catalyses the reaction tetradecanoyl-CoA + malonyl-CoA + H(+) = 3-oxohexadecanoyl-CoA + CO2 + CoA. The catalysed reaction is (9Z)-octadecenoyl-CoA + malonyl-CoA + H(+) = 3-oxo-(11Z)-eicosenoyl-CoA + CO2 + CoA. It carries out the reaction (9Z,12Z)-octadecadienoyl-CoA + malonyl-CoA + H(+) = (11Z,14Z)-3-oxoicosa-11,14-dienoyl-CoA + CO2 + CoA. The enzyme catalyses (9Z,12Z,15Z)-octadecatrienoyl-CoA + malonyl-CoA + H(+) = (11Z,14Z,17Z)-3-oxoeicosatrienoyl-CoA + CO2 + CoA. It participates in lipid metabolism; fatty acid biosynthesis. The reaction is stimulated by the presence of HSD17B12, the enzyme catalyzing the second step of the elongation cycle. In terms of biological role, catalyzes the first and rate-limiting reaction of the four reactions that constitute the long-chain fatty acids elongation cycle. This endoplasmic reticulum-bound enzymatic process allows the addition of 2 carbons to the chain of long- and very long-chain fatty acids (VLCFAs) per cycle. Condensing enzyme that elongates fatty acids with 12, 14 and 16 carbons with higher activity toward C16:0 acyl-CoAs. Catalyzes the synthesis of unsaturated C16 long chain fatty acids and, to a lesser extent, C18:0 and those with low desaturation degree. May participate in the production of saturated and monounsaturated VLCFAs of different chain lengths that are involved in multiple biological processes as precursors of membrane lipids and lipid mediators. This is Very long chain fatty acid elongase 6 from Gallus gallus (Chicken).